A 2690-amino-acid chain; its full sequence is Non-reducing polyketide synthase pigA (2690 aa).

Residues 96 to 211 form the Starter acyltransferase (SAT) domain; sequence NILLSPLVVI…AELSRVLQDF (116 aa). Cys140 serves as the catalytic Nucleophile; for transacylase activity. Residue His258 is the Proton donor/acceptor; for transacylase activity of the active site. The 417-residue stretch at 388–804 folds into the Ketosynthase family 3 (KS3) domain; that stretch reads ENDIAVIGMS…GSNASLIVTQ (417 aa). Catalysis depends on for beta-ketoacyl synthase activity residues Cys553, His688, and His727. Residues 915-1182 form the Malonyl-CoA:ACP transacylase (MAT) domain; that stretch reads FGGQISTFVG…VQRLAKQHPS (268 aa). The interval 1296-1426 is N-terminal hotdog fold; it reads LTFVGYQDKD…GKVFFRSVDD (131 aa). Residues 1296–1602 form the PKS/mFAS DH domain; sequence LTFVGYQDKD…YAKVPKMSMS (307 aa). The tract at residues 1323–1600 is product template (PT) domain; sequence LVSGHLIAQT…INYAKVPKMS (278 aa). His1327 serves as the catalytic Proton acceptor; for dehydratase activity. The interval 1454–1602 is C-terminal hotdog fold; it reads ADDIIQGRNI…YAKVPKMSMS (149 aa). The active-site Proton donor; for dehydratase activity is Asp1510. Residues 1657–1731 enclose the Carrier 1 domain; that stretch reads PDISGKVRAM…GLLRCIQEAL (75 aa). Ser1691 carries the O-(pantetheine 4'-phosphoryl)serine modification. Residues 1731 to 1764 form a disordered region; the sequence is LGPSEGVEEETDNEEGEDGESSENPSVFTPSDAA. The segment covering 1736-1751 has biased composition (acidic residues); the sequence is GVEEETDNEEGEDGES. Over residues 1755–1764 the composition is skewed to polar residues; it reads PSVFTPSDAA. The Carrier 2 domain occupies 1768–1842; sequence SSAKADVAEF…EFDVKVNGKS (75 aa). Ser1802 carries the post-translational modification O-(pantetheine 4'-phosphoryl)serine. The segment at 1948–2255 is methyltransferase domain; that stretch reads QTLERIKYLP…EVNIQRIFLA (308 aa). Positions 2320–2564 constitute a Thioester reductase (TE) domain; sequence VTGATGSLGS…LSWTPVNDVA (245 aa).

The cofactor is pantetheine 4'-phosphate.

The protein operates within secondary metabolite biosynthesis. Non-reducing polyketide synthase; part of the gene cluster that mediates the biosynthesis of azaphilone pigments (MonAzPs), a complex mixture of compounds with a common azaphilone skeleton very widely used as food colorants. PigA catalyzes the first step of MonAzPs biosynthesis and forms the hexaketide precursor from successive condensations of five malonyl-CoA units, with a simple acetyl-CoA starter unit. The starter acyl transferase (SAT) domain of pigA selects an acetyl-CoA starter unit, and the ketoacyl synthase (KS)-acyl transferase (AT)-acyl carrier protein (ACP) domains extend this starter unit five times with malonyl-CoA in five successive decarboxylative Claisen condensation cycles. The methyltransferase (MT) domain conducts a single C-methylation at C-4, most likely at the pentaketide stage. The reactive hexaketide chain then undergoes a product template (PT) domain-mediated C-2 to C-7 aldol cyclization to afford the first aromatic ring, followed by reductive release of the first pathway intermediate by the NADPH-dependent reductive release (R) domain. The role of esterase pigG is not clear, but it may play at most a supplementary role in the formation of the benzaldehyde produced by the pigA nrPKS. This very reactive benzaldehyde is intercepted by the pigC ketoreductase that to provide the first stable enzyme-free MonAzPs intermediate, 6-(4-hydroxy-2-oxopentyl)-3-methyl-2,4-dioxocyclohexane carbaldehyde, also known as M7PKS-1. The FAD-dependent monooxygenase pigN hydroxylates M7PKS-1 at C-4, which triggers the formation of the pyran ring. PigJ, pigK and pigD are involved in the acetylation of the pyran ring. PigJ and pigK form the two subunits of a dedicated fungal FAS that produces the side chain fatty acyl moiety of MonAzPs and pigD transfers the fatty acyl chain to the C-4 alcohol. PigM and pigO are involved in the elimination of the omega-1 alcohol. PigM acts as an O-acetyltransferase that synthesizes the putative O-11 acetyl intermediate whereas pigO eliminates acetic acid to yield an intermediate with a C10(11) double bond. The dehydration of the C-11 alcohol followed by the reduction of the C6(7) double bond by the NAD(P)H-dependent oxidoreductase pigE increases the electrophilicity of the C-5 ketone of the resulting acyl benzopyran. This in turn sets up the C-5 ketone for an intramolecular Knoevenagel aldol condensation with the C-20 enol of the side chain. This condensation affords the characteristic linear tricyclic carbon skeletons of the yellow pigments that serve as the common precursors for the classical yellow pigments monascin and ankaflavin, orange pigments rubopunctatin and monascorubrin, and red pigments ribropunctamine and monascorubramine. The FAD-dependent oxidoreductase pigF is especially invoved in the biosynthesis of orange and red pigments via desaturation of C6(7). In Monascus ruber (Mold), this protein is Non-reducing polyketide synthase pigA.